We begin with the raw amino-acid sequence, 194 residues long: Mitochondrial import inner membrane translocase subunit Tim22 (194 aa).

Intrachain disulfides connect cysteine 69–cysteine 141 and cysteine 160–cysteine 179. A run of 3 helical transmembrane segments spans residues 74–94 (ALACVGGFVLGGAFGVFTAGI), 123–143 (MSYAKNFAIVGAMFSCTECLV), and 170–190 (AGLKAGVIGCGGFAAFSAAID).

This sequence belongs to the Tim17/Tim22/Tim23 family. Component of the TIM22 complex, whose core is composed of TIMM22, associated with peripheral protein FXC1/TIMM10B and the 70 kDa heterohexamer. In most cases, the 70 kDa complex is composed of TIMM9 and TIMM10 (TIMM10A or TIMM10B). A small fraction of the 70 kDa complex is composed of TIMM8 (TIMM8A/DDP1 or TIMM8B/DDP2) and TIMM13. The TIM22 complex also contains AGK and TIMM29. Interacts directly with TIMM9, TIMM10A and FXC1/TIMM10B. Interacts (when oxidized) with TIMM29; interaction is direct. In terms of processing, disulfide bonds promote efficient assembly of the TIM22 complex.

It localises to the mitochondrion inner membrane. In terms of biological role, essential core component of the TIM22 complex, a complex that mediates the import and insertion of multi-pass transmembrane proteins into the mitochondrial inner membrane. In the TIM22 complex, it constitutes the voltage-activated and signal-gated channel. Forms a twin-pore translocase that uses the membrane potential as external driving force in 2 voltage-dependent steps. The sequence is that of Mitochondrial import inner membrane translocase subunit Tim22 (TIMM22) from Bos taurus (Bovine).